Here is a 130-residue protein sequence, read N- to C-terminus: Mediator of RNA polymerase II transcription subunit 10 (130 aa).

This sequence belongs to the Mediator complex subunit 10 family. In terms of assembly, component of the Mediator complex.

It localises to the nucleus. Functionally, component of the Mediator complex, a coactivator involved in the regulated transcription of nearly all RNA polymerase II-dependent genes. Mediator functions as a bridge to convey information from gene-specific regulatory proteins to the basal RNA polymerase II transcription machinery. Mediator is recruited to promoters by direct interactions with regulatory proteins and serves as a scaffold for the assembly of a functional preinitiation complex with RNA polymerase II and the general transcription factors. In Aedes aegypti (Yellowfever mosquito), this protein is Mediator of RNA polymerase II transcription subunit 10 (MED10).